The following is a 775-amino-acid chain: Lon protease (775 aa).

The Lon N-terminal domain maps to 6-207 (LPLMALRDIV…TIINILTSNI (202 aa)). 356 to 363 (GPPGVGKT) contributes to the ATP binding site. One can recognise a Lon proteolytic domain in the interval 592–773 (NDQIGSTTGL…DQVLEHALTK (182 aa)). Active-site residues include Ser679 and Lys722.

Belongs to the peptidase S16 family. As to quaternary structure, homohexamer. Organized in a ring with a central cavity.

The protein resides in the cytoplasm. It carries out the reaction Hydrolysis of proteins in presence of ATP.. Functionally, ATP-dependent serine protease that mediates the selective degradation of mutant and abnormal proteins as well as certain short-lived regulatory proteins. Required for cellular homeostasis and for survival from DNA damage and developmental changes induced by stress. Degrades polypeptides processively to yield small peptide fragments that are 5 to 10 amino acids long. Binds to DNA in a double-stranded, site-specific manner. The polypeptide is Lon protease (Rickettsia bellii (strain RML369-C)).